Here is a 266-residue protein sequence, read N- to C-terminus: Early E1A protein (266 aa).

The interval 39–47 (PSLYELYDL) is interaction with RB1 in competition with E2F1. Residues 75–145 (EGLFLPEPPV…AAAAADRERE (71 aa)) form an interaction with UBE2I region. The short motif at 98–102 (PQLHP) is the PXLXP motif, interaction with host ZMYND11 element. An LXCXE motif, interaction with host RB1 and TMEM173/STING motif is present at residues 107–111 (LLCYE). The segment at 159–179 (CKSCEHHRNSTGNTDLMCSLC) is a zinc-finger region. The tract at residues 195 to 226 (NEPEPNSTLDGDERPSPPKLGSAVPEGVIKPV) is disordered. The short motif at 255-259 (PVDLS) is the PXDLS motif, CTBP-binding element. The short motif at 261 to 265 (KRPRC) is the Nuclear localization signal element.

Belongs to the adenoviridae E1A protein family. As to quaternary structure, interacts with host UBE2I; this interaction interferes with polySUMOylation. Interacts with host RB1; this interaction induces the aberrant dissociation of RB1-E2F1 complex thereby disrupting the activity of RB1 and activating E2F1-regulated genes. Interacts with host ATF7; the interaction enhances ATF7-mediated viral transactivation activity which requires the zinc binding domains of both proteins. Isoform early E1A 32 kDa protein and isoform early E1A 26 kDa protein interact (via N-terminus) with CUL1 and E3 ubiquitin ligase RBX1; these interactions inhibit RBX1-CUL1-dependent elongation reaction of ubiquitin chains and attenuate ubiquitination of SCF(FBXW7) target proteins. Interacts (via PXLXP motif) with host ZMYND11/BS69 (via MYND-type zinc finger); this interaction inhibits E1A mediated transactivation. Interacts with host EP300; this interaction stimulates the acetylation of RB1 by recruiting EP300 and RB1 into a multimeric-protein complex. Interacts with host CTBP1 and CTBP2; this interaction seems to potentiate viral replication. Interacts with host DCAF7. Interacts with host DYRK1A. Interacts with host KPNA4; this interaction allows E1A import into the host nucleus. Interacts with host EP400; this interaction stabilizes MYC. Interacts with host TBP protein; this interaction probably disrupts the TBP-TATA complex. Interacts (via LXCXE motif) with host TMEM173/STING; this interaction impairs the ability of TMEM173/STING to sense cytosolic DNA and promote the production of type I interferon (IFN-alpha and IFN-beta). Interacts (via C-terminus) with host ZBED1/hDREF (via C-terminus); the interaction is direct.

The protein localises to the host nucleus. Functionally, plays a role in viral genome replication by driving entry of quiescent cells into the cell cycle. Stimulation of progression from G1 to S phase allows the virus to efficiently use the cellular DNA replicating machinery to achieve viral genome replication. E1A protein has both transforming and trans-activating activities. Induces the disassembly of the E2F1 transcription factor from RB1 by direct competition for the same binding site on RB1, with subsequent transcriptional activation of E2F1-regulated S-phase genes and of the E2 region of the adenoviral genome. Release of E2F1 leads to the ARF-mediated inhibition of MDM2 and causes TP53/p53 to accumulate because it is not targeted for degradation by MDM2-mediated ubiquitination anymore. This increase in TP53, in turn, would arrest the cell proliferation and direct its death but this effect is counteracted by the viral protein E1B-55K. Inactivation of the ability of RB1 to arrest the cell cycle is critical for cellular transformation, uncontrolled cellular growth and proliferation induced by viral infection. Interaction with RBX1 and CUL1 inhibits ubiquitination of the proteins targeted by SCF(FBXW7) ubiquitin ligase complex, and may be linked to unregulated host cell proliferation. The tumorigenesis-restraining activity of E1A may be related to the disruption of the host CtBP-CtIP complex through the CtBP binding motif. Interaction with host TMEM173/STING impairs the ability of TMEM173/STING to sense cytosolic DNA and promote the production of type I interferon (IFN-alpha and IFN-beta). Promotes the sumoylation of host ZBED1/hDREF with SUMO1. This is Early E1A protein from Homo sapiens (Human).